The chain runs to 198 residues: Putative pseudouridine methyltransferase (198 aa).

Residues Met-132 and Cys-186 each coordinate S-adenosyl-L-methionine.

Belongs to the methyltransferase superfamily. TrmY family.

The protein resides in the cytoplasm. The sequence is that of Putative pseudouridine methyltransferase from Photobacterium profundum (strain SS9).